We begin with the raw amino-acid sequence, 179 residues long: MTKKVKLDQDEINNKNKNNINNSFCNNKNNNSLNSDLDNLNINLYDNNNNNNNNNNNNNNNNNNNNNNNNNNNNNNNNNNNNNNNYNNFCNGNNNFNEDCNNNDNDENDRYKCNDEFDFRHKKSTRSQSQSSLNSFDQDNKSKDKKVINKTIDIRVGRPHSQPLQPQTQINIQFSKLFI.

The segment covering 1–14 has biased composition (basic and acidic residues); that stretch reads MTKKVKLDQDEINN. Disordered regions lie at residues 1-90 and 121-147; these read MTKK…NNFC and HKKS…DKKV. Composition is skewed to low complexity over residues 15–90 and 126–137; these read KNKN…NNFC and RSQSQSSLNSFD. Over residues 138-147 the composition is skewed to basic and acidic residues; that stretch reads QDNKSKDKKV.

This is an uncharacterized protein from Dictyostelium discoideum (Social amoeba).